Consider the following 132-residue polypeptide: Capsid protein (132 aa).

This sequence belongs to the Leviviricetes capsid protein family. Homodimer. The capsid protein dimer binds to the viral RNA via an operator hairpin, but also many other RNA sequences in the viral genome.

It localises to the virion. Functionally, capsid protein self-assembles to form an icosahedral capsid with a T=3 symmetry, about 26 nm in diameter, and consisting of 89 capsid proteins dimers (178 capsid proteins). Involved in viral genome encapsidation through the interaction between a capsid protein dimer and the multiple packaging signals present in the RNA genome. Binding of the capsid proteins to the viral RNA induces a conformational change required for efficient T=3 shell formation. The capsid also contains 1 copy of the A2 maturation protein. In terms of biological role, acts as a translational repressor of viral replicase synthesis late in infection. This latter function is the result of capsid protein interaction with an RNA hairpin which contains the replicase ribosome-binding site. The protein is Capsid protein of Enterobacteria phage SP (Bacteriophage SP).